The sequence spans 258 residues: Polysialic acid transport protein KpsM (258 aa).

Residues 1–30 (MARSGFEVQKVTVEALFLREIRTRFGKFRL) lie on the Cytoplasmic side of the membrane. Residues 30 to 251 (LGYLWAILEP…FIGLALYRTR (222 aa)) form the ABC transmembrane type-2 domain. The chain crosses the membrane as a helical span at residues 31-54 (GYLWAILEPSAHLLILLGILGYVM). The Periplasmic portion of the chain corresponds to 55-61 (HRTMPDI). A helical membrane pass occupies residues 62 to 81 (SFPVFLLNGLIPFFIFSSIS). Residues 82–108 (KRSIGAIEANQGLFNYRPVKPIDTIIA) lie on the Cytoplasmic side of the membrane. The chain crosses the membrane as a helical span at residues 109 to 132 (RALLETLIYVAVYILLMLIVWMTG). Topologically, residues 133-143 (EYFEITNFLQL) are periplasmic. Residues 144–165 (VLTWSLLIILSCGVGLIFMVVG) form a helical membrane-spanning segment. Over 166 to 174 (KTFPEMQKV) the chain is Cytoplasmic. A helical membrane pass occupies residues 175–195 (LPILLKPLYFISCIMFPLHSI). Topologically, residues 196–226 (PKQYWSYLLWNPLVHVVELSREAVMPGYISE) are periplasmic. Residues 227-247 (GVSLNYLAMFTLVTLFIGLAL) form a helical membrane-spanning segment. The Cytoplasmic segment spans residues 248-258 (YRTREEAMLTS).

The protein belongs to the ABC-2 integral membrane protein family.

Its subcellular location is the cell inner membrane. KpsM and KpsT constitute a system for the transport of polysialic acid across the cytoplasmic membrane. The chain is Polysialic acid transport protein KpsM (kpsM) from Escherichia coli.